The chain runs to 259 residues: Cell division protein DivIB (259 aa).

At M1–R27 the chain is on the cytoplasmic side. Residues L28–F45 form a helical membrane-spanning segment. Over Q46–E259 the chain is Extracellular. A POTRA domain is found at S50–Y118.

This sequence belongs to the FtsQ/DivIB family. DivIB subfamily.

It is found in the cell membrane. In terms of biological role, cell division protein that may be involved in stabilizing or promoting the assembly of the division complex. This Bacillus selenitireducens (strain ATCC 700615 / DSM 15326 / MLS10) protein is Cell division protein DivIB.